Reading from the N-terminus, the 254-residue chain is Serotonin N-acetyltransferase 1, chloroplastic (254 aa).

The transit peptide at 1 to 74 directs the protein to the chloroplast; the sequence is MAPAASASAS…LRSGFLKSNN (74 aa). The region spanning 111–254 is the N-acetyltransferase domain; the sequence is IIFSSAGDVN…IKGMFWYPRF (144 aa).

This sequence belongs to the acetyltransferase family. In terms of tissue distribution, expressed in roots and shoots.

The protein resides in the plastid. It is found in the chloroplast. Its subcellular location is the nucleus. The enzyme catalyses serotonin + acetyl-CoA = N-acetylserotonin + CoA + H(+). It carries out the reaction tyramine + acetyl-CoA = N-acetyltyramine + CoA + H(+). The catalysed reaction is tryptamine + acetyl-CoA = N-acetyltryptamine + CoA + H(+). It catalyses the reaction 5-methoxytryptamine + acetyl-CoA = melatonin + CoA + H(+). It participates in aromatic compound metabolism; melatonin biosynthesis; melatonin from serotonin: step 1/2. Catalyzes the N-acetylation of serotonin into N-acetylserotonin, the penultimate step in the synthesis of melatonin. Catalyzes in vitro the N-acetylation of tryptamine to produce N-acetyltryptamine, 5-methoxytryptamine to produce melatonin and tyramine to produce N-acetyltyramine. The polypeptide is Serotonin N-acetyltransferase 1, chloroplastic (Oryza sativa subsp. japonica (Rice)).